The primary structure comprises 415 residues: Thyroxine-binding globulin (415 aa).

The first 20 residues, 1–20 (MSPFLYLVLLVLGLHATIHC), serve as a signal peptide directing secretion. N36 carries an N-linked (GlcNAc...) (complex) asparagine glycan. N99 carries N-linked (GlcNAc...) asparagine glycosylation. N-linked (GlcNAc...) asparagine; in variant Gary glycosylation occurs at I116. Residues N165 and N253 are each glycosylated (N-linked (GlcNAc...) asparagine). Thyroxine-binding residues include N293 and R398.

The protein belongs to the serpin family. As to expression, expressed by the liver and secreted in plasma.

The protein localises to the secreted. In terms of biological role, major thyroid hormone transport protein in serum. This is Thyroxine-binding globulin (SERPINA7) from Homo sapiens (Human).